We begin with the raw amino-acid sequence, 477 residues long: Aspartyl/glutamyl-tRNA(Asn/Gln) amidotransferase subunit B (477 aa).

Belongs to the GatB/GatE family. GatB subfamily. Heterotrimer of A, B and C subunits.

The catalysed reaction is L-glutamyl-tRNA(Gln) + L-glutamine + ATP + H2O = L-glutaminyl-tRNA(Gln) + L-glutamate + ADP + phosphate + H(+). It carries out the reaction L-aspartyl-tRNA(Asn) + L-glutamine + ATP + H2O = L-asparaginyl-tRNA(Asn) + L-glutamate + ADP + phosphate + 2 H(+). Its function is as follows. Allows the formation of correctly charged Asn-tRNA(Asn) or Gln-tRNA(Gln) through the transamidation of misacylated Asp-tRNA(Asn) or Glu-tRNA(Gln) in organisms which lack either or both of asparaginyl-tRNA or glutaminyl-tRNA synthetases. The reaction takes place in the presence of glutamine and ATP through an activated phospho-Asp-tRNA(Asn) or phospho-Glu-tRNA(Gln). In Bdellovibrio bacteriovorus (strain ATCC 15356 / DSM 50701 / NCIMB 9529 / HD100), this protein is Aspartyl/glutamyl-tRNA(Asn/Gln) amidotransferase subunit B.